Consider the following 247-residue polypeptide: Probable phosphatase swp_1620 (247 aa).

Residues His8, His10, His16, His41, Glu74, His102, His132, Asp193, and His195 each coordinate Zn(2+).

The protein belongs to the PHP family. Requires Zn(2+) as cofactor.

This is Probable phosphatase swp_1620 from Shewanella piezotolerans (strain WP3 / JCM 13877).